Consider the following 139-residue polypeptide: FAD synthase (139 aa).

ATP is bound by residues 8–9 (VF), 13–16 (HPGH), D92, and Y119.

This sequence belongs to the archaeal FAD synthase family. Homodimer. It depends on a divalent metal cation as a cofactor.

The enzyme catalyses FMN + ATP + H(+) = FAD + diphosphate. Its pathway is cofactor biosynthesis; FAD biosynthesis; FAD from FMN: step 1/1. Catalyzes the transfer of the AMP portion of ATP to flavin mononucleotide (FMN) to produce flavin adenine dinucleotide (FAD) coenzyme. The sequence is that of FAD synthase from Picrophilus torridus (strain ATCC 700027 / DSM 9790 / JCM 10055 / NBRC 100828 / KAW 2/3).